The chain runs to 503 residues: MTAVDAPDILDYDEVLTKYEPVMGMEVHVELGTATKMFCPCPTEFGAEPNTQVCPVCLGMPGSLPVVNAAAVESAIRIGLALNCSITPWGRFARKNYFYPDQPKNYQISQYDEPIATEGYLDVILDDGTTWRVDIERAHMEEDTGKSLHVGGATGRIHGASHSLLDYNRAGVPLVEIVTKTIHGAGERAPEVARAYVTALRDLLKSLDVSDVRMDQGSMRCDANISLMPIGAKELGTRTETKNVNSLKSVEVAVRYEMRRQAAVLDAGGEVIQETRHFQEADGTTAAGRRKETAEDYRYFPEPDLEPVAPSAEWVEELRGTLPELPWIRRARIQKDWGISDEVMRDLVNAGAIDLVIATTEAGASPEAARSWWLSYLSQQANTRGVELGALPITPAQVAQVVALIDSGKLNNKVARQVVDHVLDGEGDPEQVVAAHPELVVERDETKLKAAVDEALAANPDIADKIRSGKVQAAGKIVGDVMKATRGQADAARVKELVIEACS.

It belongs to the GatB/GatE family. GatB subfamily. In terms of assembly, heterotrimer of A, B and C subunits.

The enzyme catalyses L-glutamyl-tRNA(Gln) + L-glutamine + ATP + H2O = L-glutaminyl-tRNA(Gln) + L-glutamate + ADP + phosphate + H(+). It carries out the reaction L-aspartyl-tRNA(Asn) + L-glutamine + ATP + H2O = L-asparaginyl-tRNA(Asn) + L-glutamate + ADP + phosphate + 2 H(+). Functionally, allows the formation of correctly charged Asn-tRNA(Asn) or Gln-tRNA(Gln) through the transamidation of misacylated Asp-tRNA(Asn) or Glu-tRNA(Gln) in organisms which lack either or both of asparaginyl-tRNA or glutaminyl-tRNA synthetases. The reaction takes place in the presence of glutamine and ATP through an activated phospho-Asp-tRNA(Asn) or phospho-Glu-tRNA(Gln). This Rhodococcus erythropolis (strain PR4 / NBRC 100887) protein is Aspartyl/glutamyl-tRNA(Asn/Gln) amidotransferase subunit B.